Consider the following 505-residue polypeptide: Putative diacyglycerol O-acyltransferase MT0919 (505 aa).

His167 functions as the Proton acceptor in the catalytic mechanism.

The protein belongs to the long-chain O-acyltransferase family.

The enzyme catalyses an acyl-CoA + a 1,2-diacyl-sn-glycerol = a triacyl-sn-glycerol + CoA. Its pathway is glycerolipid metabolism; triacylglycerol biosynthesis. The chain is Putative diacyglycerol O-acyltransferase MT0919 from Mycobacterium tuberculosis (strain CDC 1551 / Oshkosh).